The following is a 245-amino-acid chain: tRNA pseudouridine synthase A (245 aa).

Residue aspartate 52 is the Nucleophile of the active site. Tyrosine 110 provides a ligand contact to substrate.

This sequence belongs to the tRNA pseudouridine synthase TruA family. Homodimer.

It carries out the reaction uridine(38/39/40) in tRNA = pseudouridine(38/39/40) in tRNA. Its function is as follows. Formation of pseudouridine at positions 38, 39 and 40 in the anticodon stem and loop of transfer RNAs. The polypeptide is tRNA pseudouridine synthase A (Pseudothermotoga lettingae (strain ATCC BAA-301 / DSM 14385 / NBRC 107922 / TMO) (Thermotoga lettingae)).